Consider the following 395-residue polypeptide: Putative pyridoxal phosphate-dependent acyltransferase (395 aa).

110–111 (GF) lines the pyridoxal 5'-phosphate pocket. His135 is a substrate binding site. Pyridoxal 5'-phosphate contacts are provided by residues Ser185, 210–213 (DDAH), and 240–243 (TLSK). Lys243 bears the N6-(pyridoxal phosphate)lysine mark. Thr357 is a substrate binding site.

The protein belongs to the class-II pyridoxal-phosphate-dependent aminotransferase family. As to quaternary structure, homodimer. Requires pyridoxal 5'-phosphate as cofactor.

In Staphylococcus aureus (strain COL), this protein is Putative pyridoxal phosphate-dependent acyltransferase.